Here is a 545-residue protein sequence, read N- to C-terminus: Chaperonin GroEL (545 aa).

Residues 30–33 (TLGP), lysine 51, 87–91 (DGTTT), glycine 415, and aspartate 496 contribute to the ATP site.

The protein belongs to the chaperonin (HSP60) family. In terms of assembly, forms a cylinder of 14 subunits composed of two heptameric rings stacked back-to-back. Interacts with the co-chaperonin GroES.

The protein resides in the cytoplasm. It catalyses the reaction ATP + H2O + a folded polypeptide = ADP + phosphate + an unfolded polypeptide.. Functionally, together with its co-chaperonin GroES, plays an essential role in assisting protein folding. The GroEL-GroES system forms a nano-cage that allows encapsulation of the non-native substrate proteins and provides a physical environment optimized to promote and accelerate protein folding. The sequence is that of Chaperonin GroEL from Haemophilus influenzae (strain 86-028NP).